A 116-amino-acid chain; its full sequence is Putative pterin-4-alpha-carbinolamine dehydratase 1 (116 aa).

It belongs to the pterin-4-alpha-carbinolamine dehydratase family.

The catalysed reaction is (4aS,6R)-4a-hydroxy-L-erythro-5,6,7,8-tetrahydrobiopterin = (6R)-L-erythro-6,7-dihydrobiopterin + H2O. The sequence is that of Putative pterin-4-alpha-carbinolamine dehydratase 1 from Cupriavidus pinatubonensis (strain JMP 134 / LMG 1197) (Cupriavidus necator (strain JMP 134)).